We begin with the raw amino-acid sequence, 130 residues long: RNA silencing suppressor p14 (130 aa).

Acts as a suppressor of RNA-mediated gene silencing, also known as post-transcriptional gene silencing (PTGS), a mechanism of plant viral defense that limits the accumulation of viral RNAs. Binds to dsRNAs without size specificity. In Pothos latent virus (isolate Pigeonpea/India) (PoLV), this protein is RNA silencing suppressor p14.